Consider the following 416-residue polypeptide: Tyrosine--tRNA ligase (416 aa).

Tyrosine 40 contacts L-tyrosine. The 'HIGH' region motif lies at 45–54; the sequence is ATAASLHVGH. The L-tyrosine site is built by tyrosine 177 and glutamine 181. The 'KMSKS' region signature appears at 237–241; the sequence is KMGKS. Lysine 240 serves as a coordination point for ATP. The region spanning 351-416 is the S4 RNA-binding domain; the sequence is LSVAHFLVAA…RKKHKLVRLS (66 aa).

It belongs to the class-I aminoacyl-tRNA synthetase family. TyrS type 1 subfamily. In terms of assembly, homodimer.

It is found in the cytoplasm. It carries out the reaction tRNA(Tyr) + L-tyrosine + ATP = L-tyrosyl-tRNA(Tyr) + AMP + diphosphate + H(+). In terms of biological role, catalyzes the attachment of tyrosine to tRNA(Tyr) in a two-step reaction: tyrosine is first activated by ATP to form Tyr-AMP and then transferred to the acceptor end of tRNA(Tyr). The polypeptide is Tyrosine--tRNA ligase (Cereibacter sphaeroides (strain ATCC 17029 / ATH 2.4.9) (Rhodobacter sphaeroides)).